We begin with the raw amino-acid sequence, 334 residues long: Anthranilate phosphoribosyltransferase (334 aa).

5-phospho-alpha-D-ribose 1-diphosphate-binding positions include G79, 82–83, S87, 89–92, 107–115, and S119; these read GD, NIST, and KHGNRSISS. G79 contributes to the anthranilate binding site. S91 contacts Mg(2+). Anthranilate is bound at residue N110. An anthranilate-binding site is contributed by R165. The Mg(2+) site is built by D224 and E225.

It belongs to the anthranilate phosphoribosyltransferase family. In terms of assembly, homodimer. Requires Mg(2+) as cofactor.

It carries out the reaction N-(5-phospho-beta-D-ribosyl)anthranilate + diphosphate = 5-phospho-alpha-D-ribose 1-diphosphate + anthranilate. Its pathway is amino-acid biosynthesis; L-tryptophan biosynthesis; L-tryptophan from chorismate: step 2/5. Its function is as follows. Catalyzes the transfer of the phosphoribosyl group of 5-phosphorylribose-1-pyrophosphate (PRPP) to anthranilate to yield N-(5'-phosphoribosyl)-anthranilate (PRA). This chain is Anthranilate phosphoribosyltransferase, found in Streptococcus pneumoniae (strain ATCC 700669 / Spain 23F-1).